The following is a 51-amino-acid chain: Large ribosomal subunit protein eL39 (51 aa).

The tract at residues 32–51 (KGSVKQHPKMRHWRRNTLKK) is disordered. Over residues 33-51 (GSVKQHPKMRHWRRNTLKK) the composition is skewed to basic residues.

The protein belongs to the eukaryotic ribosomal protein eL39 family.

This Methanococcus vannielii (strain ATCC 35089 / DSM 1224 / JCM 13029 / OCM 148 / SB) protein is Large ribosomal subunit protein eL39.